The chain runs to 260 residues: Coiled-coil domain-containing protein 127 (260 aa).

A coiled-coil region spans residues 47–135 (ESQKEIEKAR…QIIQEKSQRQ (89 aa)).

In Rattus norvegicus (Rat), this protein is Coiled-coil domain-containing protein 127 (Ccdc127).